A 75-amino-acid polypeptide reads, in one-letter code: Signaling peptide TAXIMIN 1 (75 aa).

Residues 1-29 (MCDGDCRPLGFLLGLPFAFLSLLLSIIGV) form the signal peptide.

Expressed in shoot apical meristems (SAM); mostly specific to the L1 layer in the center of the meristem but also detected in the L2 layer in organ primordia. Also observed in the vasculature of seedling roots.

It is found in the secreted. With respect to regulation, counteracted by the antibiotic cefotaxime during responses to light stress. Signaling peptide involved in the regulation of lateral organs separation, including fruits and leaves. Involved in the perception of and response to light stress via the control of sinapoyl-malate accumulation, a UV-B protecting compound. This is Signaling peptide TAXIMIN 1 from Arabidopsis thaliana (Mouse-ear cress).